The sequence spans 468 residues: 6-phospho-beta-galactosidase (468 aa).

Residues Q19, H116, N159, E160, and N297 each coordinate D-galactose 6-phosphate. The active-site Proton donor is the E160. Catalysis depends on E375, which acts as the Nucleophile. Residues S428, W429, K435, and Y437 each coordinate D-galactose 6-phosphate.

It belongs to the glycosyl hydrolase 1 family.

It carries out the reaction a 6-phospho-beta-D-galactoside + H2O = D-galactose 6-phosphate + an alcohol. The protein operates within carbohydrate metabolism; lactose degradation; D-galactose 6-phosphate and beta-D-glucose from lactose 6-phosphate: step 1/1. This is 6-phospho-beta-galactosidase from Streptococcus pyogenes serotype M3 (strain ATCC BAA-595 / MGAS315).